Here is a 395-residue protein sequence, read N- to C-terminus: Xylose isomerase (395 aa).

Catalysis depends on residues His-54 and Glu-57. A disordered region spans residues 80–108 (AVPAGAGRDRHEGADGDDEPVHAPGCSRD). Mg(2+)-binding residues include Glu-189, Glu-225, His-228, Asp-253, Asp-263, Asp-265, and Asp-295.

Belongs to the xylose isomerase family. In terms of assembly, homotetramer. The cofactor is Mg(2+).

The protein localises to the cytoplasm. It carries out the reaction alpha-D-xylose = alpha-D-xylulofuranose. This Streptomyces lividans protein is Xylose isomerase.